Consider the following 322-residue polypeptide: UDP-N-acetylenolpyruvoylglucosamine reductase (322 aa).

The 167-residue stretch at 36–202 folds into the FAD-binding PCMH-type domain; sequence RAGGPAQVLF…TSVLFEGVPG (167 aa). Residue Arg-182 is part of the active site. Ser-231 functions as the Proton donor in the catalytic mechanism. Glu-301 is an active-site residue.

The protein belongs to the MurB family. The cofactor is FAD.

The protein resides in the cytoplasm. It catalyses the reaction UDP-N-acetyl-alpha-D-muramate + NADP(+) = UDP-N-acetyl-3-O-(1-carboxyvinyl)-alpha-D-glucosamine + NADPH + H(+). The protein operates within cell wall biogenesis; peptidoglycan biosynthesis. In terms of biological role, cell wall formation. The sequence is that of UDP-N-acetylenolpyruvoylglucosamine reductase from Brucella suis (strain ATCC 23445 / NCTC 10510).